The chain runs to 264 residues: Glutamate racemase (264 aa).

Substrate is bound by residues D11 to S12 and Y43 to G44. Catalysis depends on C74, which acts as the Proton donor/acceptor. N75 to T76 contacts substrate. C193 serves as the catalytic Proton donor/acceptor. T194–H195 contacts substrate.

It belongs to the aspartate/glutamate racemases family.

It catalyses the reaction L-glutamate = D-glutamate. It participates in cell wall biogenesis; peptidoglycan biosynthesis. In terms of biological role, provides the (R)-glutamate required for cell wall biosynthesis. This chain is Glutamate racemase, found in Bifidobacterium longum (strain DJO10A).